Reading from the N-terminus, the 406-residue chain is Transcriptional activator NprA (406 aa).

4 TPR repeats span residues 125–158 (YYYY…FRSQ), 206–239 (AECH…AQII), 246–279 (GTIE…KRNS), and 285–318 (FITL…LKRE).

Functionally, activates the transcription of nprS by about five fold. May bind to the upstream region of nprS promoter. This chain is Transcriptional activator NprA (nprA), found in Geobacillus stearothermophilus (Bacillus stearothermophilus).